Here is a 243-residue protein sequence, read N- to C-terminus: Ubiquinone/menaquinone biosynthesis C-methyltransferase UbiE (243 aa).

S-adenosyl-L-methionine contacts are provided by residues Thr-69, Asp-90, and Asp-116 to Ala-117.

It belongs to the class I-like SAM-binding methyltransferase superfamily. MenG/UbiE family.

The catalysed reaction is a 2-demethylmenaquinol + S-adenosyl-L-methionine = a menaquinol + S-adenosyl-L-homocysteine + H(+). The enzyme catalyses a 2-methoxy-6-(all-trans-polyprenyl)benzene-1,4-diol + S-adenosyl-L-methionine = a 5-methoxy-2-methyl-3-(all-trans-polyprenyl)benzene-1,4-diol + S-adenosyl-L-homocysteine + H(+). The protein operates within quinol/quinone metabolism; menaquinone biosynthesis; menaquinol from 1,4-dihydroxy-2-naphthoate: step 2/2. It participates in cofactor biosynthesis; ubiquinone biosynthesis. Its function is as follows. Methyltransferase required for the conversion of demethylmenaquinol (DMKH2) to menaquinol (MKH2) and the conversion of 2-polyprenyl-6-methoxy-1,4-benzoquinol (DDMQH2) to 2-polyprenyl-3-methyl-6-methoxy-1,4-benzoquinol (DMQH2). This is Ubiquinone/menaquinone biosynthesis C-methyltransferase UbiE from Burkholderia mallei (strain NCTC 10247).